A 545-amino-acid polypeptide reads, in one-letter code: 4-coumarate--CoA ligase 2 (545 aa).

6 residues coordinate ATP: Ser192, Ser193, Gly194, Thr195, Thr196, and Lys200. 2 residues coordinate (E)-4-coumaroyl-AMP: Tyr242 and Ser246. Lys263 contributes to the CoA binding site. Residues 265 to 334 (DIAQFLELIP…AKFPNAKLGQ (70 aa)) form an SBD1 region. Residues Ala312, Gln334, Gly335, Thr339, and Met347 each contribute to the (E)-4-coumaroyl-AMP site. The ATP site is built by Gln334, Gly335, and Thr339. The SBD2 stretch occupies residues 335–402 (GYGMTEAGPV…IRGDQIMKGY (68 aa)). Residues Asp423 and Arg438 each contribute to the ATP site. 2 residues coordinate (E)-4-coumaroyl-AMP: Lys440 and Lys444. The CoA site is built by Lys446 and Gly447. Residue Lys529 participates in ATP binding.

It belongs to the ATP-dependent AMP-binding enzyme family. It depends on Mg(2+) as a cofactor.

It carries out the reaction (E)-4-coumarate + ATP + CoA = (E)-4-coumaroyl-CoA + AMP + diphosphate. The catalysed reaction is (E)-4-coumarate + ATP + H(+) = (E)-4-coumaroyl-AMP + diphosphate. The enzyme catalyses (E)-4-coumaroyl-AMP + CoA = (E)-4-coumaroyl-CoA + AMP + H(+). Its pathway is phytoalexin biosynthesis; 3,4',5-trihydroxystilbene biosynthesis; 3,4',5-trihydroxystilbene from trans-4-coumarate: step 1/2. In terms of biological role, carboxylate--CoA ligase that may use 4-coumarate as substrate. Follows a two-step reaction mechanism, wherein the carboxylate substrate first undergoes adenylation by ATP, followed by a thioesterification in the presence of CoA to yield the final CoA thioester. This is 4-coumarate--CoA ligase 2 (4CL2) from Solanum tuberosum (Potato).